We begin with the raw amino-acid sequence, 463 residues long: ATP-dependent rRNA helicase SPB4 (463 aa).

The Q motif motif lies at 4–32 (KGIEDVAMNGRLKKEIEENGFGKMTEVQL). The Helicase ATP-binding domain occupies 35 to 205 (IPEVLKGKDV…RVFLRNPVSI (171 aa)). 48-55 (SPTGTGKT) contributes to the ATP binding site. The DEAD box motif lies at 153-156 (DEAD). Residues 226–382 (KLLVLMDIVT…DIKSMISPEL (157 aa)) form the Helicase C-terminal domain. The disordered stretch occupies residues 444 to 463 (RDGKKRALPKKKYRKKRAIK). Over residues 446–463 (GKKRALPKKKYRKKRAIK) the composition is skewed to basic residues.

This sequence belongs to the DEAD box helicase family. DDX55/SPB4 subfamily. In terms of assembly, component of pre-60S ribosomal complexes.

It localises to the nucleus. It is found in the nucleolus. It catalyses the reaction ATP + H2O = ADP + phosphate + H(+). Its function is as follows. ATP-binding RNA helicase involved in the biogenesis of 60S ribosomal subunits. Binds 90S pre-ribosomal particles and dissociates from pre-60S ribosomal particles after processing of 27SB pre-rRNA. Required for the normal formation of 18S rRNA through the processing of pre-rRNAs at sites A0, A1 and A2, and the normal formation of 25S and 5.8S rRNAs through the processing of pre-rRNAs at sites C1 and C2. The sequence is that of ATP-dependent rRNA helicase SPB4 from Encephalitozoon cuniculi (strain GB-M1) (Microsporidian parasite).